The chain runs to 90 residues: Protein LURE 1.5 (90 aa).

An N-terminal signal peptide occupies residues Met1–Ser19. Disulfide bonds link Cys58–Cys75 and Cys61–Cys82.

The protein belongs to the DEFL family. In terms of tissue distribution, expressed in the pistil. Detected exclusively in the synergid cells.

It localises to the secreted. Inactive pollen tube attractants guiding pollen tubes to the ovular micropyle. In Arabidopsis thaliana (Mouse-ear cress), this protein is Protein LURE 1.5.